The chain runs to 274 residues: Dermonecrotic toxin SdSicTox-betaIIB1bix (274 aa).

Histidine 5 is a catalytic residue. The Mg(2+) site is built by glutamate 25 and aspartate 27. Histidine 41 acts as the Nucleophile in catalysis. Intrachain disulfides connect cysteine 45–cysteine 51 and cysteine 47–cysteine 190. Residue aspartate 85 participates in Mg(2+) binding.

This sequence belongs to the arthropod phospholipase D family. Class II subfamily. Mg(2+) is required as a cofactor. In terms of tissue distribution, expressed by the venom gland.

It is found in the secreted. It catalyses the reaction an N-(acyl)-sphingosylphosphocholine = an N-(acyl)-sphingosyl-1,3-cyclic phosphate + choline. The enzyme catalyses an N-(acyl)-sphingosylphosphoethanolamine = an N-(acyl)-sphingosyl-1,3-cyclic phosphate + ethanolamine. The catalysed reaction is a 1-acyl-sn-glycero-3-phosphocholine = a 1-acyl-sn-glycero-2,3-cyclic phosphate + choline. It carries out the reaction a 1-acyl-sn-glycero-3-phosphoethanolamine = a 1-acyl-sn-glycero-2,3-cyclic phosphate + ethanolamine. Its function is as follows. Dermonecrotic toxins cleave the phosphodiester linkage between the phosphate and headgroup of certain phospholipids (sphingolipid and lysolipid substrates), forming an alcohol (often choline) and a cyclic phosphate. This toxin acts on sphingomyelin (SM). It may also act on ceramide phosphoethanolamine (CPE), lysophosphatidylcholine (LPC) and lysophosphatidylethanolamine (LPE), but not on lysophosphatidylserine (LPS), and lysophosphatidylglycerol (LPG). It acts by transphosphatidylation, releasing exclusively cyclic phosphate products as second products. Induces dermonecrosis, hemolysis, increased vascular permeability, edema, inflammatory response, and platelet aggregation. The polypeptide is Dermonecrotic toxin SdSicTox-betaIIB1bix (Sicarius cf. damarensis (strain GJB-2008) (Six-eyed sand spider)).